The chain runs to 438 residues: 23S rRNA (uracil(1939)-C(5))-methyltransferase RlmD (438 aa).

The region spanning 8–68 (KQKTNNVQTI…RQYGHATAKK (61 aa)) is the TRAM domain. [4Fe-4S] cluster-binding residues include C81, C87, C90, and C168. Residues Q271, F300, N305, E321, D348, and D369 each coordinate S-adenosyl-L-methionine. C395 serves as the catalytic Nucleophile.

The protein belongs to the class I-like SAM-binding methyltransferase superfamily. RNA M5U methyltransferase family. RlmD subfamily.

It catalyses the reaction uridine(1939) in 23S rRNA + S-adenosyl-L-methionine = 5-methyluridine(1939) in 23S rRNA + S-adenosyl-L-homocysteine + H(+). Functionally, catalyzes the formation of 5-methyl-uridine at position 1939 (m5U1939) in 23S rRNA. In Haemophilus influenzae (strain 86-028NP), this protein is 23S rRNA (uracil(1939)-C(5))-methyltransferase RlmD.